Consider the following 360-residue polypeptide: GDSL esterase/lipase At2g31540 (360 aa).

The N-terminal stretch at 1–23 is a signal peptide; sequence MSTSKAITLTLFIATTLLAPCNA. Catalysis depends on Ser42, which acts as the Nucleophile. Residues Asn104 and Asn326 are each glycosylated (N-linked (GlcNAc...) asparagine). Residues Asp334 and His337 contribute to the active site.

Belongs to the 'GDSL' lipolytic enzyme family.

The protein localises to the secreted. This chain is GDSL esterase/lipase At2g31540, found in Arabidopsis thaliana (Mouse-ear cress).